Reading from the N-terminus, the 401-residue chain is L-rhamnonate dehydratase (401 aa).

His-29 and Arg-55 together coordinate substrate. Residues Asp-222, Glu-248, and Glu-276 each coordinate Mg(2+). The active-site Proton acceptor is His-325. Glu-345 is a substrate binding site.

The protein belongs to the mandelate racemase/muconate lactonizing enzyme family. RhamD subfamily. In terms of assembly, homooctamer; tetramer of dimers. Mg(2+) is required as a cofactor.

It catalyses the reaction L-rhamnonate = 2-dehydro-3-deoxy-L-rhamnonate + H2O. Catalyzes the dehydration of L-rhamnonate to 2-keto-3-deoxy-L-rhamnonate (KDR). This Klebsiella pneumoniae (strain 342) protein is L-rhamnonate dehydratase.